The chain runs to 140 residues: Large ribosomal subunit protein uL14 (140 aa).

At S17 the chain carries Phosphoserine. Residue Y38 is modified to Phosphotyrosine.

The protein belongs to the universal ribosomal protein uL14 family. As to quaternary structure, component of the large ribosomal subunit.

It is found in the cytoplasm. Component of the large ribosomal subunit. The ribosome is a large ribonucleoprotein complex responsible for the synthesis of proteins in the cell. This is Large ribosomal subunit protein uL14 (RPL23) from Pongo abelii (Sumatran orangutan).